The chain runs to 369 residues: uncharacterized protein (369 aa).

Belongs to the myo-inositol 1-phosphate synthase family.

This is an uncharacterized protein from Mycobacterium leprae (strain TN).